The primary structure comprises 791 residues: Major facilitator superfamily domain-containing protein 6 (791 aa).

A2 is modified (N-acetylalanine). Phosphothreonine is present on T10. The tract at residues 22–47 (LADPFNGISREPEPPSNETPSSTETS) is disordered. Residues 37 to 47 (SNETPSSTETS) are compositionally biased toward low complexity. 6 helical membrane-spanning segments follow: residues 73-93 (VFYF…PVYY), 105-125 (LLVG…GVVA), 132-152 (KIVL…IGFV), 286-306 (AIFL…ASSV), 335-355 (WGLA…EVLI), and 369-389 (QIVF…ATQF). The interval 407 to 427 (EIPQVERNNSTESSEETPTTT) is disordered. Positions 416 to 427 (STESSEETPTTT) are enriched in low complexity. 6 helical membrane passes run 450 to 470 (VLFV…FLYW), 479 to 499 (TTLF…AYFF), 507 to 527 (IGHI…YIYI), 544 to 564 (GVTH…AVPP), 579 to 599 (LGLG…YFGA), and 605 to 625 (GIGM…WLAV). 2 disordered regions span residues 662 to 687 (MPRI…NKPA) and 723 to 791 (LQGT…AGGH). The segment covering 750–768 (SRNQPSPDAAASQTQTSPA) has biased composition (polar residues). Positions 782–791 (QQAQLAAGGH) are enriched in low complexity.

The protein belongs to the major facilitator superfamily. MFSD6 family. In terms of assembly, may interact with HLA-B62. In terms of tissue distribution, widely expressed. Expression levels in peripheral blood mononuclear cells are highly variable between individuals, including no expression at all.

Its subcellular location is the membrane. This chain is Major facilitator superfamily domain-containing protein 6 (MFSD6), found in Homo sapiens (Human).